The chain runs to 407 residues: Phosphopentomutase (407 aa).

Positions 11, 305, 310, 346, 347, and 358 each coordinate Mn(2+).

The protein belongs to the phosphopentomutase family. It depends on Mn(2+) as a cofactor.

It localises to the cytoplasm. It catalyses the reaction 2-deoxy-alpha-D-ribose 1-phosphate = 2-deoxy-D-ribose 5-phosphate. The enzyme catalyses alpha-D-ribose 1-phosphate = D-ribose 5-phosphate. It participates in carbohydrate degradation; 2-deoxy-D-ribose 1-phosphate degradation; D-glyceraldehyde 3-phosphate and acetaldehyde from 2-deoxy-alpha-D-ribose 1-phosphate: step 1/2. Its function is as follows. Isomerase that catalyzes the conversion of deoxy-ribose 1-phosphate (dRib-1-P) and ribose 1-phosphate (Rib-1-P) to deoxy-ribose 5-phosphate (dRib-5-P) and ribose 5-phosphate (Rib-5-P), respectively. The sequence is that of Phosphopentomutase from Legionella pneumophila (strain Lens).